Reading from the N-terminus, the 119-residue chain is Large ribosomal subunit protein bL20 (119 aa).

This sequence belongs to the bacterial ribosomal protein bL20 family.

In terms of biological role, binds directly to 23S ribosomal RNA and is necessary for the in vitro assembly process of the 50S ribosomal subunit. It is not involved in the protein synthesizing functions of that subunit. In Streptococcus agalactiae serotype Ia (strain ATCC 27591 / A909 / CDC SS700), this protein is Large ribosomal subunit protein bL20.